Consider the following 142-residue polypeptide: MKTFVAKPETVKRDWYIVDAEGKTLGRIATEIAARLRGKHKAEYTPHVDTGDYIIVVNAEKVHVTGKKFTDKMYHAHSGFPGGIKSISFDKLIQRKPEMVIEAAVKGMLPKGPLGRAMFRKLKVYAGAEHAHAAQQPQVLDI.

This sequence belongs to the universal ribosomal protein uL13 family. Part of the 50S ribosomal subunit.

In terms of biological role, this protein is one of the early assembly proteins of the 50S ribosomal subunit, although it is not seen to bind rRNA by itself. It is important during the early stages of 50S assembly. The chain is Large ribosomal subunit protein uL13 from Aeromonas hydrophila subsp. hydrophila (strain ATCC 7966 / DSM 30187 / BCRC 13018 / CCUG 14551 / JCM 1027 / KCTC 2358 / NCIMB 9240 / NCTC 8049).